Reading from the N-terminus, the 161-residue chain is Lipid droplet assembly factor 1 (161 aa).

Residues 1-43 (MAEEEPSSVSRDLQELQRKLGLLLESFQNNSKVVAFMKSPVGR) are Cytoplasmic-facing. The helical transmembrane segment at 44 to 61 (FLDRHPFLVLTVLMFVTM) threads the bilayer. Topologically, residues 62-67 (SAIPVG) are lumenal. The helical transmembrane segment at 68-87 (FFLLIVVLTSLGALMGAILL) threads the bilayer. At 88-93 (EGLVIS) the chain is on the cytoplasmic side. The chain crosses the membrane as a helical span at residues 94–110 (VCGLSLLCILCGLGFVS). The Lumenal portion of the chain corresponds to 111-116 (LALSGI). The helical transmembrane segment at 117 to 133 (TMMSYVVVSCLMSYWFS) threads the bilayer. Over 134–161 (PSRPPTQQHANIDSQLAMKFTESEKLGL) the chain is Cytoplasmic.

It belongs to the LDAF1 family. As to quaternary structure, interacts with BSCL2/seipin to form an oligomeric complex.

It is found in the endoplasmic reticulum membrane. It localises to the lipid droplet. Functionally, plays an important role in the formation of lipid droplets (LD) which are storage organelles at the center of lipid and energy homeostasis. In association with BSCL2/seipin, defines the sites of LD formation in the endoplasmic reticulum. The sequence is that of Lipid droplet assembly factor 1 from Rattus norvegicus (Rat).